An 897-amino-acid polypeptide reads, in one-letter code: High molecular weight rhoptry protein 3 (897 aa).

A signal peptide spans 1 to 24 (MRSKHLVTLFIITFLSFSTVKVWG). 5 disulfides stabilise this stretch: cysteine 157-cysteine 231, cysteine 244-cysteine 253, cysteine 262-cysteine 276, cysteine 421-cysteine 620, and cysteine 475-cysteine 536. Residues 597-615 (FVLYFISIISVLYINEYYY) traverse the membrane as a helical segment. Disordered regions lie at residues 788–845 (KEQS…SNLK) and 859–897 (QLDKEKPKKKKSKRKKKRDSSSDRILLEESKTFTSENEL). The span at 792 to 801 (KSTSAASTSD) shows a compositional bias: polar residues. The segment covering 802–817 (ELSGSEGPSTESTSTG) has biased composition (low complexity). At serine 804 the chain carries Phosphoserine. Over residues 820-832 (GEDKTTDNTYKEM) the composition is skewed to basic and acidic residues. Over residues 865–876 (PKKKKSKRKKKR) the composition is skewed to basic residues. The segment covering 877–889 (DSSSDRILLEESK) has biased composition (basic and acidic residues).

In terms of assembly, component of the RhopH complex, composed of CLAG3.1/CLAG3.2, RhopH2 and RhopH3 with a 1:1:1 subunit stoichiometry. Interacts with CLAG3.1/CLAG3.2. Interacts with CDPK1; the interaction promotes RhopH3 phosphorylation in merozoites. Proteolytically cleaved near C-terminus.

The protein resides in the host cell membrane. It is found in the parasitophorous vacuole membrane. Its subcellular location is the cytoplasmic vesicle. It localises to the secretory vesicle. The protein localises to the rhoptry. In terms of biological role, participates in the formation of new permeability pathways in Plasmodium-infected erythrocytes enabling the uptake of nutrients from the blood plasma. Required for maintaining invasion capacity of merozoites. Required for the trophozoite to schizont developmental transition of the intracellular parasite. This is High molecular weight rhoptry protein 3 from Plasmodium falciparum.